The primary structure comprises 169 residues: MQLKDYVKDVLDFPKKGIVFKDISPLLADKDAFDLIIKEMAKYCQNSDYIVAADARGFIFGAAIAFHLKKPFVMVRKPKKMPGPSYSVSYELEYGHNVLELQEDLIKENASVSIVDDILATGGTLNAMIELLEKAKAKVNNIVVAIDLTKLSQDFKSSLKTPLDSVIKY.

Belongs to the purine/pyrimidine phosphoribosyltransferase family. As to quaternary structure, homodimer.

Its subcellular location is the cytoplasm. It catalyses the reaction AMP + diphosphate = 5-phospho-alpha-D-ribose 1-diphosphate + adenine. It functions in the pathway purine metabolism; AMP biosynthesis via salvage pathway; AMP from adenine: step 1/1. In terms of biological role, catalyzes a salvage reaction resulting in the formation of AMP, that is energically less costly than de novo synthesis. The protein is Adenine phosphoribosyltransferase of Mycoplasmopsis synoviae (strain 53) (Mycoplasma synoviae).